Here is a 527-residue protein sequence, read N- to C-terminus: Benzoate--CoA ligase (527 aa).

Belongs to the ATP-dependent AMP-binding enzyme family. Benzoate-CoA ligase subfamily. As to quaternary structure, monomer.

The catalysed reaction is benzoate + ATP + CoA = benzoyl-CoA + AMP + diphosphate. Functionally, catalyzes the ligation of benzoate and CoA to form benzoyl-CoA at the expense of ATP. The enzyme also ligates 2-aminobenzoate and CoA. The enzyme shows activity toward a number of benzoate derivatives. The polypeptide is Benzoate--CoA ligase (bclA) (Thauera aromatica).